A 140-amino-acid chain; its full sequence is Methylglyoxal synthase (140 aa).

The MGS-like domain occupies 1–140 (MNIALIAHDE…KERQEKEGTP (140 aa)). Residues His8, Lys12, 34 to 37 (TGTT), and 54 to 55 (SG) each bind substrate. Asp60 functions as the Proton donor/acceptor in the catalytic mechanism. Residue His87 coordinates substrate.

It belongs to the methylglyoxal synthase family.

The enzyme catalyses dihydroxyacetone phosphate = methylglyoxal + phosphate. Its function is as follows. Catalyzes the formation of methylglyoxal from dihydroxyacetone phosphate. The polypeptide is Methylglyoxal synthase (Oceanobacillus iheyensis (strain DSM 14371 / CIP 107618 / JCM 11309 / KCTC 3954 / HTE831)).